An 801-amino-acid polypeptide reads, in one-letter code: MSLLHIAVILPLIFALIIPILYRFFKRIHLGWFVLSVPIVIFIYMLTLIKTTMSGNTVMKTLNWMPHFGMNFDLYLDGLGLLFSLLISGIGSLVVLYSIGYLSKSEQLGNFYCYLLLFMGAMLGVVLSDNVIILYLFWELTSFSSFLLISFWRERQASIYGAQKSLIITVFGGLSLLGGIILLAIPTQSFSIQYMIQHASEIQNSPFFIFAMILIMIGAFTKSAQFPFYIWLPDAMEAPTPVSAYLHSATMVKAGLYLIARMTPIFAASQGWVWTVTLVGLITLFWASLNATKQQDLKGILAFSTVSQLGMIMAMLGIGAISYHYQGDDSKIYAAAFTAAIFHLINHATFKGALFMITGAVDHSTGTRDVKKLGGLLTIMPISFTITVITALSMAGVPPFNGFLSKESFLETTFTASQANLFSVDTLGYLFPIIGIVGSVFTFVYSIKFIMHIFFGQYKPEQLPKKAHEVSILMLLSPAILATLVIVFGLFPGILTNSIIEPATSSINHTVIDDVEFHMFHGLTPAFLSTLVIYILGILLIVTFSYWVKLLQRQPGKLTFNYWYNRSANVIPNYSEKMTNSYVTDYSRNNLVIIFGALILLTFVTIFSVPFNINFKDVSPIRIFEVCIVILLLSAAFLILFAKSRLFSIIMLSAVGYAVSVLFIFFKAPDLALTQFVVESISTALFLLCFYHLPNLNRYNEKRSFQLTNALIAGGVGLSVIIIGLIAYGNRHFESISKFYQEHVYDLAHGKNMVNVILVDFRGMDTLFESSVLGIAGLAVYTMIKLRKKRQTQGNEVKNHE.

21 helical membrane passes run 4 to 25 (LHIA…YRFF), 30 to 49 (LGWF…LTLI), 79 to 101 (LGLL…SIGY), 108 to 127 (LGNF…GVVL), 131 to 153 (VIIL…SFWR), 166 to 188 (LIIT…IPTQ), 208 to 230 (FIFA…PFYI), 243 to 265 (SAYL…MTPI), 270 to 289 (QGWV…WASL), 302 to 324 (AFST…ISYH), 339 to 361 (AAIF…TGAV), 373 to 395 (LGGL…LSMA), 429 to 451 (YLFP…KFIM), 472 to 494 (ILML…FPGI), 526 to 548 (AFLS…SYWV), 589 to 611 (NNLV…SVPF), 621 to 641 (IRIF…LILF), 646 to 668 (LFSI…FFKA), 672 to 694 (ALTQ…YHLP), 707 to 729 (LTNA…IAYG), and 767 to 784 (LFES…YTMI).

It belongs to the CPA3 antiporters (TC 2.A.63) subunit A family. In terms of assembly, may form a heterooligomeric complex that consists of seven subunits: mnhA1, mnhB1, mnhC1, mnhD1, mnhE1, mnhF1 and mnhG1.

Its subcellular location is the cell membrane. Its activity is regulated as follows. Na(+) extrusion is completely inhibited by the H(+) conductor carbonyl cyanide m-chlorophenylhydrazone (CCCP). In terms of biological role, mnh complex is a Na(+)Li(+)/H(+) antiporter involved in Na(+) and/or Li(+) excretion. Na(+)/H(+) antiport consumes a transmembrane electrical potential, and is thus inferred to be electrogenic. Does not transport K(+), Ca(2+) or Mg(2+). The protein is Na(+)/H(+) antiporter subunit A1 (mnhA1) of Staphylococcus aureus.